The primary structure comprises 760 residues: METHRKNSVVGNILHTCHPCRRTIPYRIYAIFHTCGIIALMYHHVHSLVTANNTLITCLLLLSDIVLAFMWATTTSLRLNPVHRTECPEKYAAKPEDFPKLDVFICTADPYKEPPMMVVNTALSVMAYEYPSDKISVYVSDDGGSSLTFFALIEAAKFSKQWLPFCKKNNVQDRSPEVYFSSESHSRSDEAENLKMMYEDMKSRVEHVVESGKVETAFITCDQFRGVFDLWTDKFSRHDHPTIIQVLQNSETDMDNTRKYIMPNLIYVSREKSKVSPHHFKAGALNTLLRVSGVMTNSPIILTLDCDMYSNDPATLVRALCYLTDPEIKSGLGYVQFPQKFLGISKNDIYACENKRLFIINMVGFDGLMGPTHVGTGCFFNRRAFYGPPYMLILPEINELKPYRIADKSIKAQDVLSLAHNVAGCIYEYNTNWGSKIGFRYGSLVEDYYTGFMLHCEGWRSVFCNPKKAAFYGDSPKCLVDLVGQQIRWAVGLFEMSFSKYSPITYGIKSLDLLMGLGYCNSPFKPFWSIPLTVYGLLPQLALISGVSVFPKASDPWFWLYIILFFGAYAQDLSDFLLEGGTYRKWWNDQRMLMIKGLSSFFFGFIEFILKTLNLSTPKFNVTSKANDDDEQRKRYEQEIFDFGTSSSMFLPLTTVAIVNLLAFVWGLYGILFCGGELYLELMLVSFAVVNCLPIYGAMVLRKDDGKLSKRTCFLAGNLHVGSYCVKLLRPQVTSPLRLIHNNNTSGWFKRKKHNMNESV.

Transmembrane regions (helical) follow at residues 28 to 48 (IYAI…VHSL) and 54 to 74 (TLIT…WATT). Active-site residues include aspartate 142 and aspartate 447. Helical transmembrane passes span 530–550 (IPLT…VSVF), 558–578 (FWLY…DFLL), 593–613 (LMIK…LKTL), 656–676 (VAIV…FCGG), and 680–700 (LELM…GAMV).

This sequence belongs to the glycosyltransferase 2 family. Plant cellulose synthase-like G subfamily. Expressed in young seedlings, primarily in the vascular tissue.

It is found in the golgi apparatus membrane. Functionally, thought to be a Golgi-localized beta-glycan synthase that polymerize the backbones of noncellulosic polysaccharides (hemicelluloses) of plant cell wall. This chain is Cellulose synthase-like protein G1 (CSLG1), found in Arabidopsis thaliana (Mouse-ear cress).